Here is a 175-residue protein sequence, read N- to C-terminus: Methylated-DNA--protein-cysteine methyltransferase (175 aa).

The Nucleophile; methyl group acceptor role is filled by Cys142.

The protein belongs to the MGMT family.

The protein resides in the cytoplasm. The enzyme catalyses a 6-O-methyl-2'-deoxyguanosine in DNA + L-cysteinyl-[protein] = S-methyl-L-cysteinyl-[protein] + a 2'-deoxyguanosine in DNA. The catalysed reaction is a 4-O-methyl-thymidine in DNA + L-cysteinyl-[protein] = a thymidine in DNA + S-methyl-L-cysteinyl-[protein]. In terms of biological role, involved in the cellular defense against the biological effects of O6-methylguanine (O6-MeG) and O4-methylthymine (O4-MeT) in DNA. Repairs the methylated nucleobase in DNA by stoichiometrically transferring the methyl group to a cysteine residue in the enzyme. This is a suicide reaction: the enzyme is irreversibly inactivated. In Thermococcus barophilus (strain DSM 11836 / MP), this protein is Methylated-DNA--protein-cysteine methyltransferase.